We begin with the raw amino-acid sequence, 86 residues long: CLAVATA3/ESR (CLE)-related protein 7 (86 aa).

The first 22 residues, Met1–Gly22, serve as a signal peptide directing secretion. Asn46 carries N-linked (GlcNAc...) asparagine glycosylation. The interval Val63 to Ile86 is disordered. 2 positions are modified to hydroxyproline: Pro68 and Pro71. An O-linked (Ara...) hydroxyproline glycan is attached at Pro71.

It belongs to the CLV3/ESR signal peptide family. Post-translationally, the O-glycosylation (arabinosylation) of the hydroxyproline Pro-71 enhances binding affinity of the CLE7p peptide for its receptor. Expressed in roots and seedlings.

It is found in the secreted. It localises to the extracellular space. Extracellular signal peptide that regulates cell fate. The sequence is that of CLAVATA3/ESR (CLE)-related protein 7 from Arabidopsis thaliana (Mouse-ear cress).